Consider the following 696-residue polypeptide: Translation factor waclaw, mitochondrial (696 aa).

A mitochondrion-targeting transit peptide spans 1 to 76 (MIVGYSVFFH…RNLSTTNQVK (76 aa)). In terms of domain architecture, tr-type G spans 97-278 (ERIRNFSIIA…RVIETVPPPQ (182 aa)). Residues 106–113 (AHVDHGKS), 171–175 (DTPGH), and 225–228 (NKID) each bind GTP.

The protein belongs to the TRAFAC class translation factor GTPase superfamily. Classic translation factor GTPase family. LepA subfamily.

It localises to the mitochondrion inner membrane. The catalysed reaction is GTP + H2O = GDP + phosphate + H(+). In terms of biological role, promotes mitochondrial protein synthesis. May act as a fidelity factor of the translation reaction, by catalyzing a one-codon backward translocation of tRNAs on improperly translocated ribosomes. Binds to mitochondrial ribosomes in a GTP-dependent manner. The protein is Translation factor waclaw, mitochondrial of Drosophila melanogaster (Fruit fly).